The sequence spans 68 residues: uncharacterized protein (68 aa).

This is an uncharacterized protein from Dictyostelium discoideum (Social amoeba).